The following is a 210-amino-acid chain: Superoxide dismutase [Mn], mitochondrial (210 aa).

4 residues coordinate Mn(2+): H30, H78, D166, and H170.

The protein belongs to the iron/manganese superoxide dismutase family. Homotetramer. Requires Mn(2+) as cofactor. In terms of processing, the N-terminus is blocked.

Its subcellular location is the mitochondrion matrix. The catalysed reaction is 2 superoxide + 2 H(+) = H2O2 + O2. Its function is as follows. Destroys superoxide anion radicals which are normally produced within the cells and which are toxic to biological systems. The protein is Superoxide dismutase [Mn], mitochondrial (SOD) of Penicillium chrysogenum (Penicillium notatum).